A 120-amino-acid polypeptide reads, in one-letter code: Holo-[acyl-carrier-protein] synthase (120 aa).

Mg(2+)-binding residues include aspartate 6 and glutamate 55.

It belongs to the P-Pant transferase superfamily. AcpS family. It depends on Mg(2+) as a cofactor.

The protein localises to the cytoplasm. The enzyme catalyses apo-[ACP] + CoA = holo-[ACP] + adenosine 3',5'-bisphosphate + H(+). Functionally, transfers the 4'-phosphopantetheine moiety from coenzyme A to a Ser of acyl-carrier-protein. The polypeptide is Holo-[acyl-carrier-protein] synthase (Pelodictyon phaeoclathratiforme (strain DSM 5477 / BU-1)).